The following is a 90-amino-acid chain: UPF0335 protein RPB_1426 (90 aa).

Belongs to the UPF0335 family.

The protein is UPF0335 protein RPB_1426 of Rhodopseudomonas palustris (strain HaA2).